Reading from the N-terminus, the 420-residue chain is Serine hydroxymethyltransferase (420 aa).

Residues L121 and G125 to L127 each bind (6S)-5,6,7,8-tetrahydrofolate. K229 is subject to N6-(pyridoxal phosphate)lysine.

This sequence belongs to the SHMT family. In terms of assembly, homodimer. Pyridoxal 5'-phosphate is required as a cofactor.

The protein resides in the cytoplasm. It carries out the reaction (6R)-5,10-methylene-5,6,7,8-tetrahydrofolate + glycine + H2O = (6S)-5,6,7,8-tetrahydrofolate + L-serine. It participates in one-carbon metabolism; tetrahydrofolate interconversion. It functions in the pathway amino-acid biosynthesis; glycine biosynthesis; glycine from L-serine: step 1/1. Functionally, catalyzes the reversible interconversion of serine and glycine with tetrahydrofolate (THF) serving as the one-carbon carrier. This reaction serves as the major source of one-carbon groups required for the biosynthesis of purines, thymidylate, methionine, and other important biomolecules. Also exhibits THF-independent aldolase activity toward beta-hydroxyamino acids, producing glycine and aldehydes, via a retro-aldol mechanism. The polypeptide is Serine hydroxymethyltransferase (Pasteurella multocida (strain Pm70)).